Here is a 465-residue protein sequence, read N- to C-terminus: Putative ABC transporter ATP-binding protein MG065 homolog (465 aa).

The ABC transporter domain occupies 232-465; sequence IELKNVYKYI…PKQVEDINWI (234 aa). Residue 268 to 275 coordinates ATP; it reads GPSGSGKT.

It belongs to the ABC transporter superfamily.

This Mycoplasma pneumoniae (strain ATCC 29342 / M129 / Subtype 1) (Mycoplasmoides pneumoniae) protein is Putative ABC transporter ATP-binding protein MG065 homolog.